Reading from the N-terminus, the 502-residue chain is MNKRVKIVSTLGPAVEIRGGKKFGESGYWGESLDVEASAKNIAALIEEGANVFRFNFSHGDHPEQGARMATVHRAEEIAGHKVGFLLDTKGPEMRTELFADGADAISVVTGDKFRVATKQGLKSTPELIALNVAGGLDIFDDVEIGQTILIDDGKLGLSLTGKDAATREFEVEAQNDGVIGKQKGVNIPNTKIPFPALAERDDADIRFGLSQPGGINFIAISFVRTANDVKEVRRICEETGNPHVQLLAKIENQQGIENLDEIIEAADGIMIARGDMGIEVPFEMVPVYQKLIISKVNKAGKIVVTATNMLESMTYNPRATRSEISDVFNAVIDGTDATMLSGESANGKYPRESVRTMATVNKNAQTMLKEYGRLHPERYDKSTVTEVVAASVKNAAEAMDIKLIVALTESGNTARLISKHRPNADILAITFDEKVERGLMINWGVIPTMTEKPSSTDDMFEVAEKVALASGLVESGDNIIIVAGVPVGTGRTNTMRIRTVK.

R54 contributes to the substrate binding site. Residues N56, S58, D88, and T89 each coordinate K(+). 56 to 59 (NFSH) lines the ATP pocket. Residues R95 and K184 each coordinate ATP. E252 provides a ligand contact to Mg(2+). The substrate site is built by G275, D276, and T308. Mg(2+) is bound at residue D276.

It belongs to the pyruvate kinase family. Homotetramer. The cofactor is Mg(2+). K(+) serves as cofactor.

It catalyses the reaction pyruvate + ATP = phosphoenolpyruvate + ADP + H(+). Its pathway is carbohydrate degradation; glycolysis; pyruvate from D-glyceraldehyde 3-phosphate: step 5/5. Regulated by phosphoenolpyruvate substrate and is allosterically activated by ribose-5-phosphate, AMP and other nucleoside monophosphates but not by fructose-1,6-bisphosphate. The sequence is that of Pyruvate kinase (pyk) from Lactococcus lactis subsp. lactis (strain IL1403) (Streptococcus lactis).